The chain runs to 290 residues: Acetylglutamate kinase (290 aa).

Residues Gly-72–Gly-73, Arg-94, and Asn-187 contribute to the substrate site.

It belongs to the acetylglutamate kinase family. ArgB subfamily.

It is found in the plastid. The protein resides in the chloroplast. The enzyme catalyses N-acetyl-L-glutamate + ATP = N-acetyl-L-glutamyl 5-phosphate + ADP. It functions in the pathway amino-acid biosynthesis; L-arginine biosynthesis; N(2)-acetyl-L-ornithine from L-glutamate: step 2/4. Catalyzes the ATP-dependent phosphorylation of N-acetyl-L-glutamate. This is Acetylglutamate kinase from Cyanidioschyzon merolae (strain NIES-3377 / 10D) (Unicellular red alga).